The following is a 236-amino-acid chain: Methylosome subunit pICln (236 aa).

Ser2 is subject to N-acetylserine. Positions Glu88 to Ser109 are disordered. A phosphoserine mark is found at Ser95, Ser143, Ser192, Ser194, Ser197, and Ser209. Positions Ser95–Pro107 are enriched in acidic residues. At Thr222 the chain carries Phosphothreonine.

The protein belongs to the pICln (TC 1.A.47) family. Component of the methylosome, a 20S complex containing at least PRMT5/SKB1, WDR77/MEP50 and CLNS1A/pICln. May mediate SNRPD1 and SNRPD3 methylation. Forms a 6S pICln-Sm complex composed of CLNS1A/pICln, SNRPD1, SNRPD2, SNRPE, SNRPF and SNRPG; ring-like structure where CLNS1A/pICln mimics additional Sm proteins and which is unable to assemble into the core snRNP. Interacts with LSM10 and LSM11.

The protein resides in the cytoplasm. The protein localises to the cytosol. It is found in the nucleus. It localises to the cytoskeleton. Its function is as follows. Involved in both the assembly of spliceosomal snRNPs and the methylation of Sm proteins. Chaperone that regulates the assembly of spliceosomal U1, U2, U4 and U5 small nuclear ribonucleoproteins (snRNPs), the building blocks of the spliceosome, and thereby plays an important role in the splicing of cellular pre-mRNAs. Most spliceosomal snRNPs contain a common set of Sm proteins SNRPB, SNRPD1, SNRPD2, SNRPD3, SNRPE, SNRPF and SNRPG that assemble in a heptameric protein ring on the Sm site of the small nuclear RNA to form the core snRNP (Sm core). In the cytosol, the Sm proteins SNRPD1, SNRPD2, SNRPE, SNRPF and SNRPG are trapped in an inactive 6S pICln-Sm complex by the chaperone CLNS1A that controls the assembly of the core snRNP. Dissociation by the SMN complex of CLNS1A from the trapped Sm proteins and their transfer to an SMN-Sm complex triggers the assembly of core snRNPs and their transport to the nucleus. This chain is Methylosome subunit pICln (Clns1a), found in Mus musculus (Mouse).